Here is a 111-residue protein sequence, read N- to C-terminus: Holo-[acyl-carrier-protein] synthase (111 aa).

The Mg(2+) site is built by aspartate 8 and glutamate 57.

It belongs to the P-Pant transferase superfamily. AcpS family. It depends on Mg(2+) as a cofactor.

The protein resides in the cytoplasm. It catalyses the reaction apo-[ACP] + CoA = holo-[ACP] + adenosine 3',5'-bisphosphate + H(+). In terms of biological role, transfers the 4'-phosphopantetheine moiety from coenzyme A to a Ser of acyl-carrier-protein. The sequence is that of Holo-[acyl-carrier-protein] synthase from Mycoplasmoides gallisepticum (strain R(low / passage 15 / clone 2)) (Mycoplasma gallisepticum).